The chain runs to 160 residues: Small ribosomal subunit protein bS6 (160 aa).

Positions 96-160 (RKVKRFIPRA…PRTRKVSKEQ (65 aa)) are disordered. Low complexity predominate over residues 126 to 145 (TTDASKTEASTEATASKQSE). Residues 151-160 (PRTRKVSKEQ) are compositionally biased toward basic residues.

It belongs to the bacterial ribosomal protein bS6 family.

Functionally, binds together with bS18 to 16S ribosomal RNA. The polypeptide is Small ribosomal subunit protein bS6 (Metamycoplasma arthritidis (strain 158L3-1) (Mycoplasma arthritidis)).